We begin with the raw amino-acid sequence, 317 residues long: Ventral anterior homeobox 1 (317 aa).

The segment at 1 to 62 is disordered; the sequence is MEVRYSQDSE…CEKSRASSGD (62 aa). Basic and acidic residues predominate over residues 18-27; that stretch reads GLKEGKEGKD. Residues 92–151 constitute a DNA-binding region (homeobox); the sequence is PKRTRTSFTAEQLYRLEMEFQRCQYVVGRERTELARQLNLSETQVKVWFQNRRTKQKKDQ. The tract at residues 203–248 is disordered; the sequence is GPSLGITANGGSSSSSRSSAGSSGTAGGSPPLPTVTSSGTVTGLQG. The segment covering 212 to 225 has biased composition (low complexity); sequence GGSSSSSRSSAGSS. A compositionally biased stretch (polar residues) spans 236 to 247; the sequence is TVTSSGTVTGLQ.

Belongs to the EMX homeobox family. In terms of tissue distribution, expressed in the anterior neural keel and later in the preoptic area and optic stalk.

Its subcellular location is the nucleus. In terms of biological role, transcription factor that is required for closure of the choroid fissure and together with Vax2 is required for optic nerve differentiation and to limit retinal development to the optic cup. The chain is Ventral anterior homeobox 1 (vax1) from Danio rerio (Zebrafish).